The following is a 207-amino-acid chain: Histidine biosynthesis bifunctional protein HisIE (207 aa).

Residues 1-117 are phosphoribosyl-AMP cyclohydrolase; sequence MSLVTTINWE…GKQEQPALVF (117 aa). A phosphoribosyl-ATP pyrophosphohydrolase region spans residues 118–207; it reads LHQLEQVLAN…TEKLQERHNK (90 aa).

The protein in the N-terminal section; belongs to the PRA-CH family. It in the C-terminal section; belongs to the PRA-PH family.

The protein localises to the cytoplasm. The catalysed reaction is 1-(5-phospho-beta-D-ribosyl)-ATP + H2O = 1-(5-phospho-beta-D-ribosyl)-5'-AMP + diphosphate + H(+). It carries out the reaction 1-(5-phospho-beta-D-ribosyl)-5'-AMP + H2O = 1-(5-phospho-beta-D-ribosyl)-5-[(5-phospho-beta-D-ribosylamino)methylideneamino]imidazole-4-carboxamide. The protein operates within amino-acid biosynthesis; L-histidine biosynthesis; L-histidine from 5-phospho-alpha-D-ribose 1-diphosphate: step 2/9. It participates in amino-acid biosynthesis; L-histidine biosynthesis; L-histidine from 5-phospho-alpha-D-ribose 1-diphosphate: step 3/9. The polypeptide is Histidine biosynthesis bifunctional protein HisIE (Photobacterium profundum (strain SS9)).